The following is a 154-amino-acid chain: Superoxide dismutase [Cu-Zn] (154 aa).

H47, H49, and H64 together coordinate Cu cation. Residues C58 and C147 are joined by a disulfide bond. Zn(2+) is bound by residues H64, H72, H81, and D84. A Cu cation-binding site is contributed by H121. R144 is a substrate binding site.

The protein belongs to the Cu-Zn superoxide dismutase family. Homodimer. It depends on Cu cation as a cofactor. The cofactor is Zn(2+).

It is found in the cytoplasm. It localises to the mitochondrion. Its subcellular location is the cell membrane. It carries out the reaction 2 superoxide + 2 H(+) = H2O2 + O2. Functionally, destroys radicals which are normally produced within the cells and which are toxic to biological systems. Destroys radicals produced by host defense mechanisms. This chain is Superoxide dismutase [Cu-Zn], found in Cryptococcus neoformans var. grubii serotype A (strain H99 / ATCC 208821 / CBS 10515 / FGSC 9487) (Filobasidiella neoformans var. grubii).